A 309-amino-acid polypeptide reads, in one-letter code: Protoheme IX farnesyltransferase 2 (309 aa).

The next 8 helical transmembrane spans lie at 35-55, 59-79, 107-127, 131-151, 159-179, 186-206, 238-258, and 289-309; these read FKVV…APDV, MGVQ…AAVI, AHAL…LMLW, LTAI…TSFL, IVIG…SETG, WLLV…LAIA, LLAI…IYLI, and FSII…WLLL.

It belongs to the UbiA prenyltransferase family. Protoheme IX farnesyltransferase subfamily.

The protein resides in the cell inner membrane. It catalyses the reaction heme b + (2E,6E)-farnesyl diphosphate + H2O = Fe(II)-heme o + diphosphate. It functions in the pathway porphyrin-containing compound metabolism; heme O biosynthesis; heme O from protoheme: step 1/1. Converts heme B (protoheme IX) to heme O by substitution of the vinyl group on carbon 2 of heme B porphyrin ring with a hydroxyethyl farnesyl side group. The chain is Protoheme IX farnesyltransferase 2 from Pseudoalteromonas translucida (strain TAC 125).